The sequence spans 105 residues: Intermembrane phospholipid transport system binding protein MlaB (105 aa).

The region spanning 4 to 105 (WDLQKNNDKI…GLSDWIANFI (102 aa)) is the STAS domain.

The complex is composed of two ATP-binding proteins (MlaF), two transmembrane proteins (MlaE), two cytoplasmic solute-binding proteins (MlaB) and six periplasmic solute-binding proteins (MlaD).

The protein localises to the cytoplasm. Its function is as follows. Part of the ABC transporter complex MlaFEDB, which is involved in a phospholipid transport pathway that maintains lipid asymmetry in the outer membrane by retrograde trafficking of phospholipids from the outer membrane to the inner membrane. MlaB plays critical roles in both the assembly and activity of the complex. May act by modulating MlaF structure and stability. The sequence is that of Intermembrane phospholipid transport system binding protein MlaB from Haemophilus influenzae (strain ATCC 51907 / DSM 11121 / KW20 / Rd).